Here is a 59-residue protein sequence, read N- to C-terminus: UPF0434 protein RHOS4_00640 (59 aa).

The protein belongs to the UPF0434 family.

This chain is UPF0434 protein RHOS4_00640, found in Cereibacter sphaeroides (strain ATCC 17023 / DSM 158 / JCM 6121 / CCUG 31486 / LMG 2827 / NBRC 12203 / NCIMB 8253 / ATH 2.4.1.) (Rhodobacter sphaeroides).